The following is a 143-amino-acid chain: 3-dehydroquinate dehydratase (143 aa).

Tyr-23 (proton acceptor) is an active-site residue. Substrate contacts are provided by Asn-74, His-80, and Asp-87. The active-site Proton donor is the His-100. Substrate-binding positions include 101–102 (IS) and Arg-111.

It belongs to the type-II 3-dehydroquinase family. In terms of assembly, homododecamer.

It catalyses the reaction 3-dehydroquinate = 3-dehydroshikimate + H2O. Its pathway is metabolic intermediate biosynthesis; chorismate biosynthesis; chorismate from D-erythrose 4-phosphate and phosphoenolpyruvate: step 3/7. Its function is as follows. Catalyzes a trans-dehydration via an enolate intermediate. In Endomicrobium trichonymphae, this protein is 3-dehydroquinate dehydratase.